A 735-amino-acid chain; its full sequence is Funoran endo-beta-hydrolase (735 aa).

The first 27 residues, 1 to 27, serve as a signal peptide directing secretion; that stretch reads MRVKSVYKKLSVSFILVMLSASQEVNS. The active-site Proton donor is E200. The active-site Nucleophile is E322.

It belongs to the glycosyl hydrolase 86 family.

It catalyses the reaction Endohydrolysis of beta-(1-&gt;4)-linkages between beta-D-galactopyranose-6-sulfate and 3,6-anhydro-alpha-L-galactopyranose units in funoran.. It carries out the reaction Hydrolysis of (1-&gt;4)-beta-D-galactosidic linkages in agarose, giving the tetramer as the predominant product.. Its activity is regulated as follows. Agarase activity is enhanced in the presence of NaCl. Agarase activity is significantly inhibited by Zn(2+) and slightly activated by several divalent ions including Mg(2+), Cd(2+) and Ca(2+). Endohydrolase that cleaves the beta-1,4 glycosidic bond between beta-D-galactopyranose-6-sulfate (G6S) and 3,6-anhydro-alpha-L-galactopyranose (LA) unit of funoran, a polysaccharide produced by red algae of the genus Gloiopeltis. It releases the disaccharide LA-G6S as the predominant end product. Also acts as a random endo-acting beta-agarase, which can hydrolyze agarose tetrasaccharides and hexasaccharides, and produces disaccharides as smallest products. Besides typical agarose oligosaccharides, it can use methylated galactoses. The enzyme exhibits higher catalytic efficiency towards agarose, but binds funoran preferentially. Has no activity on porphyran. This is Funoran endo-beta-hydrolase from Wenyingzhuangia aestuarii.